We begin with the raw amino-acid sequence, 1207 residues long: DNA-directed RNA polymerase subunit beta (1207 aa).

Belongs to the RNA polymerase beta chain family. In terms of assembly, the RNAP catalytic core consists of 2 alpha, 1 beta, 1 beta' and 1 omega subunit. When a sigma factor is associated with the core the holoenzyme is formed, which can initiate transcription.

It catalyses the reaction RNA(n) + a ribonucleoside 5'-triphosphate = RNA(n+1) + diphosphate. In terms of biological role, DNA-dependent RNA polymerase catalyzes the transcription of DNA into RNA using the four ribonucleoside triphosphates as substrates. This Enterococcus faecalis (strain ATCC 700802 / V583) protein is DNA-directed RNA polymerase subunit beta.